The chain runs to 382 residues: Cytoplasmic tRNA 2-thiolation protein 2 (382 aa).

The protein belongs to the CTU2/NCS2 family.

The protein resides in the cytoplasm. It functions in the pathway tRNA modification; 5-methoxycarbonylmethyl-2-thiouridine-tRNA biosynthesis. Its function is as follows. Plays a central role in 2-thiolation of mcm(5)S(2)U at tRNA wobble positions of tRNA(Lys), tRNA(Glu) and tRNA(Gln). May act by forming a heterodimer with NCS6 that ligates sulfur from thiocarboxylated URM1 onto the uridine of tRNAs at wobble position. Prior mcm(5) tRNA modification by the elongator complex is required for 2-thiolation. May also be involved in protein urmylation. The chain is Cytoplasmic tRNA 2-thiolation protein 2 from Phaeosphaeria nodorum (strain SN15 / ATCC MYA-4574 / FGSC 10173) (Glume blotch fungus).